The sequence spans 466 residues: Asparagine--tRNA ligase (466 aa).

This sequence belongs to the class-II aminoacyl-tRNA synthetase family. Homodimer.

It is found in the cytoplasm. It carries out the reaction tRNA(Asn) + L-asparagine + ATP = L-asparaginyl-tRNA(Asn) + AMP + diphosphate + H(+). This Pectobacterium atrosepticum (strain SCRI 1043 / ATCC BAA-672) (Erwinia carotovora subsp. atroseptica) protein is Asparagine--tRNA ligase.